The primary structure comprises 409 residues: uncharacterized protein (409 aa).

Positions 1-26 (MKKELLASLVLCLSLSPLVSTNEVFA) are cleaved as a signal peptide.

This is an uncharacterized protein from Bacillus subtilis (strain 168).